Consider the following 188-residue polypeptide: Large ribosomal subunit protein uL5 (188 aa).

Belongs to the universal ribosomal protein uL5 family. Part of the 50S ribosomal subunit; part of the 5S rRNA/L5/L18/L25 subcomplex. Contacts the 5S rRNA and the P site tRNA. Forms a bridge to the 30S subunit in the 70S ribosome.

This is one of the proteins that bind and probably mediate the attachment of the 5S RNA into the large ribosomal subunit, where it forms part of the central protuberance. In the 70S ribosome it contacts protein S13 of the 30S subunit (bridge B1b), connecting the 2 subunits; this bridge is implicated in subunit movement. Contacts the P site tRNA; the 5S rRNA and some of its associated proteins might help stabilize positioning of ribosome-bound tRNAs. In Aquifex aeolicus (strain VF5), this protein is Large ribosomal subunit protein uL5.